The following is a 687-amino-acid chain: Putative mitochondrial carnitine O-acetyltransferase (687 aa).

His346 acts as the Proton acceptor in catalysis. A CoA-binding site is contributed by 446–459 (GASHIKTVFKCSPD). Residues Tyr481 and Thr494 each coordinate (R)-carnitine. Ser517 is modified (phosphoserine).

It belongs to the carnitine/choline acetyltransferase family.

The protein localises to the mitochondrion inner membrane. The enzyme catalyses (R)-carnitine + acetyl-CoA = O-acetyl-(R)-carnitine + CoA. Functionally, involved in the transfer of acetyl-CoA into mitochondria. May also be involved in the metabolism of acetate and of ethanol. In Saccharomyces cerevisiae (strain ATCC 204508 / S288c) (Baker's yeast), this protein is Putative mitochondrial carnitine O-acetyltransferase (YAT1).